The following is a 286-amino-acid chain: Homoserine kinase (286 aa).

78–88 contributes to the ATP binding site; it reads PLARGLGSSSS.

This sequence belongs to the GHMP kinase family. Homoserine kinase subfamily.

It localises to the cytoplasm. The enzyme catalyses L-homoserine + ATP = O-phospho-L-homoserine + ADP + H(+). Its pathway is amino-acid biosynthesis; L-threonine biosynthesis; L-threonine from L-aspartate: step 4/5. In terms of biological role, catalyzes the ATP-dependent phosphorylation of L-homoserine to L-homoserine phosphate. The sequence is that of Homoserine kinase from Streptococcus equi subsp. zooepidemicus (strain H70).